The sequence spans 210 residues: Orotate phosphoribosyltransferase (210 aa).

K26 serves as a coordination point for 5-phospho-alpha-D-ribose 1-diphosphate. 34 to 35 lines the orotate pocket; sequence FF. 5-phospho-alpha-D-ribose 1-diphosphate-binding positions include 72-73, R98, K99, K102, H104, and 123-131; these read YK and DDVITAGTA. Residues T127 and R155 each coordinate orotate.

The protein belongs to the purine/pyrimidine phosphoribosyltransferase family. PyrE subfamily. In terms of assembly, homodimer. The cofactor is Mg(2+).

The catalysed reaction is orotidine 5'-phosphate + diphosphate = orotate + 5-phospho-alpha-D-ribose 1-diphosphate. It functions in the pathway pyrimidine metabolism; UMP biosynthesis via de novo pathway; UMP from orotate: step 1/2. Its function is as follows. Catalyzes the transfer of a ribosyl phosphate group from 5-phosphoribose 1-diphosphate to orotate, leading to the formation of orotidine monophosphate (OMP). The sequence is that of Orotate phosphoribosyltransferase from Legionella pneumophila (strain Paris).